The following is a 765-amino-acid chain: MHSISALLSLLGGLALSSAAPTQNITSDAYFYGQSPAVYPSPEGTGTGSWASAYEKAKAFVAQLTDDEKVNLTAGVSSKTGCSGFIAEIPRLNFTGLCVSDASNGLRGTDYVNGWSSGIHVGASWNRTLARDRAKYMGQEFHRKGVNLLLGPVVGPLGRVAEGGRNWEGFSNDPYLTGALVYETVQGVQSSGVGVSTKHYIGNEQETNRNPETVNGVDVASVSSNIDDKTIHELYLWPFQDAVLAGSVAIMCSYERINNSYACQNSKTLNGLLKTELGFQGYVITDWGAQHGGIASANAGLDMVMPETTLWGSNLTTAIANGTMEASRLDDMATRIIATWYQLNQDTDFPTPGVGMPASAQSEHQVVVGTAPDEKSTLLESAIEGHVLVKNTNNALPLQTPQLVSVFGYDAKVTDSFDLASTVLGTSPLFQNYTLWVGGGSGSNSPAYVIAPLNAIQQQAYEDGTSVLWDVSAQDPEVDPTSEACLVFINSFATEGYDRSALTDDYSDTLVTNVASKCNNTIVVVHNAGIRLVYNWIDHENVTAVVLAHLPGQDTGHALVDILYGRANPSGKLPYTIAKQASDYGSLLHPSEPQTPYGLFPQSDFSEGVYIDYRAFDKDNITPQFEFGFGLSYTTFAYSGLSIEKTNETTSEYPPSAAIQEGGNPRLWDDLVTVTAEVQNSGSVDGAEVAQLYVGIPNGPVRQLRGFDKVLLSAGETAQVSFSLNRRDLSTWNVEAQQWQLQSGTYQVYVGRSSRDLPLTGEFSI.

The signal sequence occupies residues 1 to 19 (MHSISALLSLLGGLALSSA). Residues N24, N71, N93, N126, and N258 are each glycosylated (N-linked (GlcNAc...) asparagine). D286 is a catalytic residue. N-linked (GlcNAc...) asparagine glycans are attached at residues N314, N321, N432, N519, N541, and N647.

This sequence belongs to the glycosyl hydrolase 3 family.

The protein resides in the secreted. It catalyses the reaction Hydrolysis of terminal, non-reducing beta-D-glucosyl residues with release of beta-D-glucose.. Its pathway is glycan metabolism; cellulose degradation. Functionally, beta-glucosidases are one of a number of cellulolytic enzymes involved in the degradation of cellulosic biomass. Catalyzes the last step releasing glucose from the inhibitory cellobiose. This is Probable beta-glucosidase M (bglM) from Aspergillus niger (strain ATCC MYA-4892 / CBS 513.88 / FGSC A1513).